The primary structure comprises 121 residues: Small ribosomal subunit protein uS13 (121 aa).

Residues 91-121 (HRKGLPLRGQRTRTNARTRKGPRKAGVALKK) form a disordered region.

Belongs to the universal ribosomal protein uS13 family. In terms of assembly, part of the 30S ribosomal subunit. Forms a loose heterodimer with protein S19. Forms two bridges to the 50S subunit in the 70S ribosome.

Functionally, located at the top of the head of the 30S subunit, it contacts several helices of the 16S rRNA. In the 70S ribosome it contacts the 23S rRNA (bridge B1a) and protein L5 of the 50S subunit (bridge B1b), connecting the 2 subunits; these bridges are implicated in subunit movement. Contacts the tRNAs in the A and P-sites. The polypeptide is Small ribosomal subunit protein uS13 (Cupriavidus pinatubonensis (strain JMP 134 / LMG 1197) (Cupriavidus necator (strain JMP 134))).